Reading from the N-terminus, the 515-residue chain is ATP synthase subunit alpha (515 aa).

Residue 169–176 (GDRQTGKT) coordinates ATP.

This sequence belongs to the ATPase alpha/beta chains family. As to quaternary structure, F-type ATPases have 2 components, CF(1) - the catalytic core - and CF(0) - the membrane proton channel. CF(1) has five subunits: alpha(3), beta(3), gamma(1), delta(1), epsilon(1). CF(0) has three main subunits: a(1), b(2) and c(9-12). The alpha and beta chains form an alternating ring which encloses part of the gamma chain. CF(1) is attached to CF(0) by a central stalk formed by the gamma and epsilon chains, while a peripheral stalk is formed by the delta and b chains.

It localises to the cell inner membrane. It carries out the reaction ATP + H2O + 4 H(+)(in) = ADP + phosphate + 5 H(+)(out). In terms of biological role, produces ATP from ADP in the presence of a proton gradient across the membrane. The alpha chain is a regulatory subunit. The protein is ATP synthase subunit alpha of Neisseria meningitidis serogroup C / serotype 2a (strain ATCC 700532 / DSM 15464 / FAM18).